A 210-amino-acid chain; its full sequence is MKNKLDLSLYLVATKGSKSEECFLNTLENAIKGGVSIIQLREKELNAREFYKLGLKVQKLCKSYKIPFLINDRVDIALALDADGVHLGQEDLEAKLARKLLGDEKIIGLSLKKLEQLEFIQGVNYLGCGAIKATPTKESSLLSLELLSQICDKSPIGVVAIGGIDKEALVELKGINLSGVAVVRAIMDAKDAFLAAKELKRKIYENLSLK.

4-amino-2-methyl-5-(diphosphooxymethyl)pyrimidine is bound by residues 39–43 (QLREK) and Asn71. The Mg(2+) site is built by Asp72 and Asp91. 4-amino-2-methyl-5-(diphosphooxymethyl)pyrimidine is bound at residue Ser110. A 2-[(2R,5Z)-2-carboxy-4-methylthiazol-5(2H)-ylidene]ethyl phosphate-binding site is contributed by 134–136 (TPT). A 4-amino-2-methyl-5-(diphosphooxymethyl)pyrimidine-binding site is contributed by Lys137. Residue Gly163 coordinates 2-[(2R,5Z)-2-carboxy-4-methylthiazol-5(2H)-ylidene]ethyl phosphate.

It belongs to the thiamine-phosphate synthase family. It depends on Mg(2+) as a cofactor.

It catalyses the reaction 2-[(2R,5Z)-2-carboxy-4-methylthiazol-5(2H)-ylidene]ethyl phosphate + 4-amino-2-methyl-5-(diphosphooxymethyl)pyrimidine + 2 H(+) = thiamine phosphate + CO2 + diphosphate. It carries out the reaction 2-(2-carboxy-4-methylthiazol-5-yl)ethyl phosphate + 4-amino-2-methyl-5-(diphosphooxymethyl)pyrimidine + 2 H(+) = thiamine phosphate + CO2 + diphosphate. The catalysed reaction is 4-methyl-5-(2-phosphooxyethyl)-thiazole + 4-amino-2-methyl-5-(diphosphooxymethyl)pyrimidine + H(+) = thiamine phosphate + diphosphate. Its pathway is cofactor biosynthesis; thiamine diphosphate biosynthesis; thiamine phosphate from 4-amino-2-methyl-5-diphosphomethylpyrimidine and 4-methyl-5-(2-phosphoethyl)-thiazole: step 1/1. Functionally, condenses 4-methyl-5-(beta-hydroxyethyl)thiazole monophosphate (THZ-P) and 2-methyl-4-amino-5-hydroxymethyl pyrimidine pyrophosphate (HMP-PP) to form thiamine monophosphate (TMP). The chain is Thiamine-phosphate synthase from Campylobacter jejuni subsp. jejuni serotype O:2 (strain ATCC 700819 / NCTC 11168).